A 405-amino-acid chain; its full sequence is Adenylosuccinate synthetase (405 aa).

Residues 12–18 (GDEGKGK) and 40–42 (GHT) each bind GTP. D13 acts as the Proton acceptor in catalysis. Residues D13 and G40 each contribute to the Mg(2+) site. IMP is bound by residues 13 to 16 (DEGK), 38 to 41 (NAGH), T121, R135, Q213, T228, and R297. Catalysis depends on H41, which acts as the Proton donor. 293–299 (TTTGRPR) lines the substrate pocket. GTP-binding positions include R299, 325-327 (KMD), and 390-392 (SAG).

Belongs to the adenylosuccinate synthetase family. As to quaternary structure, homodimer. Requires Mg(2+) as cofactor.

Its subcellular location is the cytoplasm. The catalysed reaction is IMP + L-aspartate + GTP = N(6)-(1,2-dicarboxyethyl)-AMP + GDP + phosphate + 2 H(+). It participates in purine metabolism; AMP biosynthesis via de novo pathway; AMP from IMP: step 1/2. Plays an important role in the de novo pathway of purine nucleotide biosynthesis. Catalyzes the first committed step in the biosynthesis of AMP from IMP. The sequence is that of Adenylosuccinate synthetase from Deinococcus radiodurans (strain ATCC 13939 / DSM 20539 / JCM 16871 / CCUG 27074 / LMG 4051 / NBRC 15346 / NCIMB 9279 / VKM B-1422 / R1).